We begin with the raw amino-acid sequence, 1612 residues long: DNA topoisomerase 2-beta (1612 aa).

A2 carries the N-acetylalanine modification. K3 is subject to N6-acetyllysine. Residues K21 and K22 each participate in a glycyl lysine isopeptide (Lys-Gly) (interchain with G-Cter in SUMO2) cross-link. ATP is bound by residues N100, N129, and 157 to 159 (SSN). Residues K165 and K166 each participate in a glycyl lysine isopeptide (Lys-Gly) (interchain with G-Cter in SUMO2) cross-link. 170–177 (GRNGYGAK) is an ATP binding site. Glycyl lysine isopeptide (Lys-Gly) (interchain with G-Cter in SUMO2) cross-links involve residues K216 and K287. An interaction with DNA region spans residues 351–353 (KKK). Glycyl lysine isopeptide (Lys-Gly) (interchain with G-Cter in SUMO2) cross-links involve residues K355 and K361. 385 to 387 (QTK) serves as a coordination point for ATP. Glycyl lysine isopeptide (Lys-Gly) (interchain with G-Cter in SUMO2) cross-links involve residues K425, K427, and K434. The region spanning 464-581 (CTLILTEGDS…SLLKHGFLEE (118 aa)) is the Toprim domain. The Mg(2+) site is built by E470, D550, and D552. Glycyl lysine isopeptide (Lys-Gly) (interchain with G-Cter in SUMO2) cross-links involve residues K588, K593, K623, K631, K634, K664, and K700. Positions 724 to 1177 (IPSLVDGFKP…SPSDLWKEDL (454 aa)) constitute a Topo IIA-type catalytic domain. Residue Y814 is the O-(5'-phospho-DNA)-tyrosine intermediate of the active site. An interaction with DNA region spans residues 999–1008 (KLQTTLTCNS). Residue K1080 forms a Glycyl lysine isopeptide (Lys-Gly) (interchain with G-Cter in SUMO2) linkage. The interval 1098 to 1128 (AWKEAQEKAAEEEDSQNQHDDSSSDSGTPSG) is disordered. Residues K1202, K1205, K1214, and K1215 each participate in a glycyl lysine isopeptide (Lys-Gly) (interchain with G-Cter in SUMO2) cross-link. S1224 bears the Phosphoserine mark. Residues K1238, K1250, and K1259 each participate in a glycyl lysine isopeptide (Lys-Gly) (interchain with G-Cter in SUMO2) cross-link. The disordered stretch occupies residues 1245 to 1586 (LLKKKKGDPD…FTSEPPALPR (342 aa)). At T1280 the chain carries Phosphothreonine. Residues K1311 and K1315 each participate in a glycyl lysine isopeptide (Lys-Gly) (interchain with G-Cter in SUMO2) cross-link. Basic and acidic residues-rich tracts occupy residues 1322-1332 (PWSDDESKSES) and 1346-1358 (SLLRRAAAERPKY). Residues S1324, S1328, S1330, S1332, and S1346 each carry the phosphoserine modification. Y1358 is modified (phosphotyrosine). Positions 1362 to 1379 (FSEEEDDDAAAADDSNDL) are enriched in acidic residues. Phosphoserine occurs at positions 1363 and 1376. K1385 participates in a covalent cross-link: Glycyl lysine isopeptide (Lys-Gly) (interchain with G-Cter in SUMO2). S1387 bears the Phosphoserine mark. T1390 carries the phosphothreonine modification. Phosphoserine is present on S1400. The residue at position 1408 (Y1408) is a Phosphotyrosine. Phosphoserine is present on S1411. Over residues 1417 to 1429 (ATPEKSSNDKKSQ) the composition is skewed to basic and acidic residues. A Glycyl lysine isopeptide (Lys-Gly) (interchain with G-Cter in SUMO2) cross-link involves residue K1427. S1428, S1439, and S1441 each carry phosphoserine. Residue K1443 forms a Glycyl lysine isopeptide (Lys-Gly) (interchain with G-Cter in SUMO2) linkage. Positions 1443-1453 (KSEDDSAKFDS) are enriched in basic and acidic residues. S1448, S1453, and S1460 each carry phosphoserine. A Glycyl lysine isopeptide (Lys-Gly) (interchain with G-Cter in SUMO2) cross-link involves residue K1477. An interaction with PLSCR1 region spans residues 1493–1499 (KAKRAPK). 3 positions are modified to phosphoserine: S1509, S1511, and S1513. Residues 1526–1536 (GKGRGAKKRKA) show a composition bias toward basic residues. A phosphoserine mark is found at S1537 and S1539. Over residues 1550–1561 (KPSKTASKKPKK) the composition is skewed to basic residues. T1562 bears the Phosphothreonine mark. Residues S1563 and S1568 each carry the phosphoserine modification. Y1596 is modified (phosphotyrosine). A Phosphoserine modification is found at S1600.

This sequence belongs to the type II topoisomerase family. Homodimer. Interacts with KIAA1210. Interacts with PLSCR1. The cofactor is Mg(2+). Requires Mn(2+) as cofactor. Ca(2+) serves as cofactor.

The protein localises to the nucleus. It localises to the nucleolus. The protein resides in the nucleoplasm. It catalyses the reaction ATP-dependent breakage, passage and rejoining of double-stranded DNA.. Key decatenating enzyme that alters DNA topology by binding to two double-stranded DNA molecules, generating a double-stranded break in one of the strands, passing the intact strand through the broken strand, and religating the broken strand. Plays a role in B-cell differentiation. This chain is DNA topoisomerase 2-beta (Top2b), found in Mus musculus (Mouse).